The sequence spans 884 residues: Valine--tRNA ligase (884 aa).

The 'HIGH' region motif lies at 43–53 (PNVTGSLHIGH). The 'KMSKS' region motif lies at 530-534 (KMSKS). Lys533 provides a ligand contact to ATP. The stretch at 817 to 884 (VIDLDAERGR…KLKAALERLM (68 aa)) forms a coiled coil.

Belongs to the class-I aminoacyl-tRNA synthetase family. ValS type 1 subfamily. Monomer.

The protein resides in the cytoplasm. The catalysed reaction is tRNA(Val) + L-valine + ATP = L-valyl-tRNA(Val) + AMP + diphosphate. Catalyzes the attachment of valine to tRNA(Val). As ValRS can inadvertently accommodate and process structurally similar amino acids such as threonine, to avoid such errors, it has a 'posttransfer' editing activity that hydrolyzes mischarged Thr-tRNA(Val) in a tRNA-dependent manner. The polypeptide is Valine--tRNA ligase (Zymomonas mobilis subsp. mobilis (strain ATCC 31821 / ZM4 / CP4)).